The sequence spans 286 residues: uncharacterized protein (286 aa).

2 disordered regions span residues 59-89 and 225-286; these read PESA…PGAK and RQRK…EDTR. Low complexity predominate over residues 69–85; the sequence is AEAESAGTAAATESHGA.

This is an uncharacterized protein from Mus musculus (Mouse).